Consider the following 83-residue polypeptide: Small ribosomal subunit protein eS21 (83 aa).

Belongs to the eukaryotic ribosomal protein eS21 family. In terms of assembly, component of the 40S small ribosomal subunit. Interacts with sta.

The protein resides in the cytoplasm. Its subcellular location is the cytosol. It is found in the rough endoplasmic reticulum. Functionally, may be an associated component of the ribosome rather than a core structural subunit. May act as a translation initiation factor. Has a role in regulation of cell proliferation in the hematopoietic organs and the imaginal disks of larva. This chain is Small ribosomal subunit protein eS21 (RpS21), found in Drosophila simulans (Fruit fly).